The sequence spans 311 residues: 4-hydroxy-tetrahydrodipicolinate synthase (311 aa).

T51 provides a ligand contact to pyruvate. Residue Y140 is the Proton donor/acceptor of the active site. Residue K168 is the Schiff-base intermediate with substrate of the active site. I209 is a pyruvate binding site.

This sequence belongs to the DapA family. As to quaternary structure, homotetramer; dimer of dimers.

The protein resides in the cytoplasm. It carries out the reaction L-aspartate 4-semialdehyde + pyruvate = (2S,4S)-4-hydroxy-2,3,4,5-tetrahydrodipicolinate + H2O + H(+). It functions in the pathway amino-acid biosynthesis; L-lysine biosynthesis via DAP pathway; (S)-tetrahydrodipicolinate from L-aspartate: step 3/4. Its function is as follows. Catalyzes the condensation of (S)-aspartate-beta-semialdehyde [(S)-ASA] and pyruvate to 4-hydroxy-tetrahydrodipicolinate (HTPA). The protein is 4-hydroxy-tetrahydrodipicolinate synthase of Streptococcus pneumoniae (strain CGSP14).